The chain runs to 184 residues: MDLSSLSPAKGSVKNKKRVGRGQGSGNGTTAGKGNKGQQSRSGYKRPVSEGGQMPLYRRLPKFGFTKPNRKSVIGVNLSQIAKWIEDGRVSSEVGVEDFKQLCNASKSDYFKVLGNGELGTAVKITAHFVSKSAEEKIKQAGGEVILAERTLLEAERVRDLSTDEALLKPKAKLRKFKKQSKSS.

The interval 1–55 (MDLSSLSPAKGSVKNKKRVGRGQGSGNGTTAGKGNKGQQSRSGYKRPVSEGGQMP) is disordered. Positions 21–35 (RGQGSGNGTTAGKGN) are enriched in gly residues.

Belongs to the universal ribosomal protein uL15 family. In terms of assembly, part of the 50S ribosomal subunit.

Binds to the 23S rRNA. The polypeptide is Large ribosomal subunit protein uL15 (Prosthecochloris aestuarii (strain DSM 271 / SK 413)).